The primary structure comprises 153 residues: Regulator of sigma D (153 aa).

This sequence belongs to the Rsd/AlgQ family. In terms of assembly, interacts with RpoD.

It is found in the cytoplasm. In terms of biological role, binds RpoD and negatively regulates RpoD-mediated transcription activation by preventing the interaction between the primary sigma factor RpoD with the catalytic core of the RNA polymerase and with promoter DNA. May be involved in replacement of the RNA polymerase sigma subunit from RpoD to RpoS during the transition from exponential growth to the stationary phase. In Pectobacterium atrosepticum (strain SCRI 1043 / ATCC BAA-672) (Erwinia carotovora subsp. atroseptica), this protein is Regulator of sigma D.